We begin with the raw amino-acid sequence, 275 residues long: Axoneme-associated protein mst101(3) (275 aa).

12 tandem repeats follow at residues 64–79 (KKKC…EAAE), 80–95 (KKKC…EAAE), 96–111 (KKKC…EAAQ), 112–127 (KKKC…EAAE), 128–143 (KKKC…EAAE), 144–159 (RKKC…CEEA), 160–175 (AKKK…LQQK), 181–196 (KKEK…EEAA), 197–212 (KKKA…AEEV), 215–230 (KKKA…CAEA), 231–246 (KKKA…CEEA), and 249–264 (KKMC…CAEA). Residues 64–264 (KKKCAEAAKK…AALQKKCAEA (201 aa)) are 12 X 16 AA tandem repeats of [KRA]-K-[KEM]-[CKA]-[AEKD]-[EA]-[ALE]-[AMK]-[FKAML]-[KQA]-[EQKA]-[KQCEM]-[ECLA]-[AEQ]-[AEQ]-[EQAKV].

As to expression, testis.

The protein localises to the cytoplasm. Functionally, possible structural role in the sperm tail. The sequence is that of Axoneme-associated protein mst101(3) (mst101(3)) from Drosophila hydei (Fruit fly).